The chain runs to 992 residues: UPF0182 protein RHA1_ro06389 (992 aa).

Helical transmembrane passes span 18 to 38 (VLLVLALVVAALLLVGPRLIS), 63 to 83 (LLLFLVVGVVVGGIVWLALLL), 114 to 134 (LFGLAIPIAVGLLAGLIAQSS), 174 to 194 (WLFVAVLLAFFASLVTHYIFG), 211 to 231 (VQLAVLAGTFILLKAVAYWFD), 260 to 280 (KLILLAIAVICAGAFFAAIFL), and 288 to 308 (MATALLVLSSILVGAVWPLVV). Residues 904–948 (TGSVATAPSAEEGTPPETGTTPPVDQGAAPAPTAPATPPSGTDVS) form a disordered region. Residues 908–934 (ATAPSAEEGTPPETGTTPPVDQGAAPA) show a composition bias toward low complexity.

This sequence belongs to the UPF0182 family.

Its subcellular location is the cell membrane. The chain is UPF0182 protein RHA1_ro06389 from Rhodococcus jostii (strain RHA1).